The sequence spans 673 residues: RAS guanyl-releasing protein 4 (673 aa).

2 stretches are compositionally biased toward basic residues: residues 1–10 and 20–32; these read MNRKDSKRKS and GRGR…RHKT. Disordered stretches follow at residues 1–34 and 162–188; these read MNRK…KTCP and QSLG…PGLG. Positions 49–172 constitute an N-terminal Ras-GEF domain; that stretch reads GMLNEGGCSE…SLGDFSSRLS (124 aa). Residues 201–432 form the Ras-GEF domain; it reads ETGELAEHLT…YELSYAREPR (232 aa). The EF-hand domain maps to 466–501; that stretch reads HVEQLVESVFKNYDPDGRGTISQEDFERLSGNFPFA. Residues 540–590 form a Phorbol-ester/DAG-type zinc finger; sequence LHTFQEVTFRKPTFCNSCSGFLWGVTKQGYRCRDCGLCCHRHCRDQVKVEC. Disordered stretches follow at residues 593–618 and 638–673; these read RPGA…ASCG and RHAW…KLNS. Positions 603 to 612 are enriched in pro residues; sequence PEAPVPPTPV.

It belongs to the RASGRP family.

The protein localises to the cytoplasm. It is found in the cell membrane. Its function is as follows. Functions as a cation- and diacylglycerol (DAG)-regulated nucleotide exchange factor activating Ras through the exchange of bound GDP for GTP. In neutrophils, participates in a phospholipase C-activating N-formyl peptide-activated GPCR (G protein-coupled receptor) signaling pathway by promoting Ras-mediated activation of PIK3CG/PI3Kgamma to promote neutrophil functional responses. In CD117(+) dendritic cells and mast cells, participates in an lipopolysaccharide (LPS)-activated signaling pathway that stimulates the production of interferon-gamma and other pro-inflammatory cytokines by natural killer (NK) cells. May function in mast cell differentiation. Does not appear to be required for the development of B-cells, DC-cells, T-cells, or NK-cells. The sequence is that of RAS guanyl-releasing protein 4 (RASGRP4) from Bos taurus (Bovine).